The sequence spans 183 residues: Archaemetzincin (183 aa).

A Zn(2+)-binding site is contributed by His-132. Residue Glu-133 is the Proton acceptor of the active site. Zn(2+) is bound by residues His-136, His-142, Cys-143, Cys-148, Cys-167, and Cys-170.

Belongs to the peptidase M54 family. As to quaternary structure, monomer. Requires Zn(2+) as cofactor.

Its function is as follows. Probable zinc metalloprotease whose natural substrate is unknown. This Aeropyrum pernix (strain ATCC 700893 / DSM 11879 / JCM 9820 / NBRC 100138 / K1) protein is Archaemetzincin.